A 506-amino-acid chain; its full sequence is Putative amidase (506 aa).

Active-site charge relay system residues include Lys121 and Ser196. The active-site Acyl-ester intermediate is Ser220.

It belongs to the amidase family.

The catalysed reaction is a monocarboxylic acid amide + H2O = a monocarboxylate + NH4(+). The protein is Putative amidase of Synechocystis sp. (strain ATCC 27184 / PCC 6803 / Kazusa).